The following is a 139-amino-acid chain: 3-hydroxyacyl-[acyl-carrier-protein] dehydratase FabZ (139 aa).

Histidine 47 is a catalytic residue.

It belongs to the thioester dehydratase family. FabZ subfamily.

It localises to the cytoplasm. It catalyses the reaction a (3R)-hydroxyacyl-[ACP] = a (2E)-enoyl-[ACP] + H2O. Its function is as follows. Involved in unsaturated fatty acids biosynthesis. Catalyzes the dehydration of short chain beta-hydroxyacyl-ACPs and long chain saturated and unsaturated beta-hydroxyacyl-ACPs. The sequence is that of 3-hydroxyacyl-[acyl-carrier-protein] dehydratase FabZ from Oenococcus oeni (strain ATCC BAA-331 / PSU-1).